The primary structure comprises 350 residues: Erythronate-4-phosphate dehydrogenase (350 aa).

Ser45 and Thr66 together coordinate substrate. NAD(+) is bound by residues 124-125, Asp144, 203-205, and Asp226; these read QV and ASR. Arg205 is a catalytic residue. Glu231 is a catalytic residue. The active-site Proton donor is the His248. Gly251 is a binding site for NAD(+).

This sequence belongs to the D-isomer specific 2-hydroxyacid dehydrogenase family. PdxB subfamily. In terms of assembly, homodimer.

It is found in the cytoplasm. It catalyses the reaction 4-phospho-D-erythronate + NAD(+) = (R)-3-hydroxy-2-oxo-4-phosphooxybutanoate + NADH + H(+). The protein operates within cofactor biosynthesis; pyridoxine 5'-phosphate biosynthesis; pyridoxine 5'-phosphate from D-erythrose 4-phosphate: step 2/5. In terms of biological role, catalyzes the oxidation of erythronate-4-phosphate to 3-hydroxy-2-oxo-4-phosphonooxybutanoate. The chain is Erythronate-4-phosphate dehydrogenase from Legionella pneumophila (strain Lens).